A 321-amino-acid chain; its full sequence is Oxidoreductase P35 (321 aa).

This sequence belongs to the Gfo/Idh/MocA family.

It localises to the cell surface. In terms of biological role, oxidoreductase that may be involved in ulvan degradation. Ulvan is the main polysaccharide component of the Ulvales (green seaweed) cell wall. It is composed of disaccharide building blocks comprising 3-sulfated rhamnose (Rha3S) linked to D-glucuronic acid (GlcA), L-iduronic acid (IduA), or D-xylose (Xyl). This is Oxidoreductase P35 from Formosa agariphila (strain DSM 15362 / KCTC 12365 / LMG 23005 / KMM 3901 / M-2Alg 35-1).